The sequence spans 110 residues: Ubiquitin-related modifier 1 (110 aa).

Gly-110 carries the 1-thioglycine modification. A Glycyl lysine isopeptide (Gly-Lys) (interchain with K-? in acceptor proteins) cross-link involves residue Gly-110.

It belongs to the URM1 family. In terms of assembly, homodimer; homodimerization may provide an autoprotection to the highly active C-terminal residue before attacking its substrates. Forms a conjugate with the target protein AHP1. In terms of processing, C-terminal thiocarboxylation occurs in 2 steps, it is first acyl-adenylated (-COAMP) via the hesA/moeB/thiF part of UBA4, then thiocarboxylated (-COSH) via the rhodanese domain of UBA4.

Its subcellular location is the cytoplasm. It functions in the pathway tRNA modification; 5-methoxycarbonylmethyl-2-thiouridine-tRNA biosynthesis. Its function is as follows. Acts as a sulfur carrier required for 2-thiolation of mcm(5)S(2)U at tRNA wobble positions of cytosolic tRNA(Lys), tRNA(Glu) and tRNA(Gln). Serves as sulfur donor in tRNA 2-thiolation reaction by being thiocarboxylated (-COSH) at its C-terminus by the MOCS3 homolog UBA4. The sulfur is then transferred to tRNA to form 2-thiolation of mcm(5)S(2)U. Prior mcm(5) tRNA modification by the elongator complex is required for 2-thiolation. Also acts as a ubiquitin-like protein (UBL) that is covalently conjugated via an isopeptide bond to lysine residues of target proteins such as AHP1. Conjugation does not depend on the canonical cascade of E2 ubiquitin-conjugating enzymes and/or E3 ligases. The conjugation reaction requires a thiocarboxylated C-terminus of URM1 and a peroxidatic cysteine in the target protein, as the sulfur atom of the URM1 thiocarboxyl group is transferred to redox-active cysteine residues in the target protein. Oxidative stress specifically induces the formation of UBL-protein conjugates. Covalent modification with URM1 promotes the phase separation of a wide range of proteins into condensates like stress granules. The polypeptide is Ubiquitin-related modifier 1 (Chaetomium thermophilum (strain DSM 1495 / CBS 144.50 / IMI 039719) (Thermochaetoides thermophila)).